The sequence spans 304 residues: Pyridoxal 5'-phosphate synthase subunit pyroA (304 aa).

Asp28 is a binding site for D-ribose 5-phosphate. The active-site Schiff-base intermediate with D-ribose 5-phosphate is Lys85. Gly157 provides a ligand contact to D-ribose 5-phosphate. Arg169 lines the D-glyceraldehyde 3-phosphate pocket. Residues Gly224 and 245-246 each bind D-ribose 5-phosphate; that span reads GS.

The protein belongs to the PdxS/SNZ family.

It catalyses the reaction aldehydo-D-ribose 5-phosphate + D-glyceraldehyde 3-phosphate + L-glutamine = pyridoxal 5'-phosphate + L-glutamate + phosphate + 3 H2O + H(+). The protein operates within cofactor biosynthesis; pyridoxal 5'-phosphate biosynthesis. Catalyzes the formation of pyridoxal 5'-phosphate from ribose 5-phosphate (RBP), glyceraldehyde 3-phosphate (G3P) and ammonia. The ammonia is provided by PDX2. Can also use ribulose 5-phosphate and dihydroxyacetone phosphate as substrates, resulting from enzyme-catalyzed isomerization of RBP and G3P, respectively. Also plays an indirect role in resistance to singlet oxygen-generating photosensitizers. The sequence is that of Pyridoxal 5'-phosphate synthase subunit pyroA (pyroA) from Emericella nidulans (strain FGSC A4 / ATCC 38163 / CBS 112.46 / NRRL 194 / M139) (Aspergillus nidulans).